We begin with the raw amino-acid sequence, 1178 residues long: Leucine--tRNA ligase, cytoplasmic (1178 aa).

L-leucine contacts are provided by tyrosine 54 and tyrosine 56. Positions 62–65 (HLGH) match the 'HIGH' region motif. Phosphoserine is present on serine 169. The editing domain stretch occupies residues 262-511 (GPQEYTLVKL…DAGDALIYME (250 aa)). 2 residues coordinate L-leucine: leucine 596 and serine 599. The 'KMSKS' region signature appears at 718-722 (KMSKS). An ATP-binding site is contributed by lysine 721. Serine 722 carries the phosphoserine modification. Lysine 972 and lysine 1049 each carry N6-acetyllysine.

This sequence belongs to the class-I aminoacyl-tRNA synthetase family.

The protein resides in the cytoplasm. It catalyses the reaction tRNA(Leu) + L-leucine + ATP = L-leucyl-tRNA(Leu) + AMP + diphosphate. The enzyme catalyses L-methionyl-tRNA(Leu) + H2O = tRNA(Leu) + L-methionine + H(+). With respect to regulation, 5-fluoro-1,3-dihydro-1-hydroxy-1,2-benzoxaborole inhibits LARS1 by forming a covalent adduct with the 3' adenosine of tRNA(Leu) at the editing site, thus locking the enzyme in an inactive conformation. Functionally, aminoacyl-tRNA synthetase that catalyzes the specific attachment of leucine to its cognate tRNA (tRNA(Leu)). It performs tRNA aminoacylation in a two-step reaction: Leu is initially activated by ATP to form a leucyl-adenylate (Leu-AMP) intermediate; then the leucyl moiety is transferred to the acceptor 3' end of the tRNA to yield leucyl-tRNA. To improve the fidelity of catalytic reactions, it is also able to hydrolyze misactivated aminoacyl-adenylate intermediates (pre-transfer editing) and mischarged aminoacyl-tRNAs (post-transfer editing). This Mus musculus (Mouse) protein is Leucine--tRNA ligase, cytoplasmic (Lars1).